A 400-amino-acid chain; its full sequence is Subtilisin-like protease 7 (400 aa).

Positions 1–20 (MGFITKAIPLALAAASVING) are cleaved as a signal peptide. A propeptide spanning residues 21–119 (AEIMETRAGV…IERDARVQIN (99 aa)) is cleaved from the precursor. Positions 36 to 118 (KYIVVMNDGM…YIERDARVQI (83 aa)) constitute an Inhibitor I9 domain. Asn58 carries N-linked (GlcNAc...) asparagine glycosylation. The region spanning 129–400 (SWGLARVGSK…SKLINNGSGM (272 aa)) is the Peptidase S8 domain. Catalysis depends on charge relay system residues Asp161 and His192. N-linked (GlcNAc...) asparagine glycosylation is found at Asn222 and Asn252. Ser346 acts as the Charge relay system in catalysis. A glycan (N-linked (GlcNAc...) asparagine) is linked at Asn396.

Belongs to the peptidase S8 family.

Its subcellular location is the secreted. Functionally, secreted subtilisin-like serine protease with keratinolytic activity that contributes to pathogenicity. The polypeptide is Subtilisin-like protease 7 (SUB7) (Arthroderma benhamiae (Trichophyton mentagrophytes)).